Here is a 467-residue protein sequence, read N- to C-terminus: Serine/threonine-protein phosphatase 2A 56 kDa regulatory subunit epsilon isoform (467 aa).

Positions 1–40 are disordered; sequence MSSAPTTPPSVDKVDGFSRKSVRKARQKRSQSSSQFRSQG. Position 2 is an N-acetylserine (Ser2). At Thr7 the chain carries Phosphothreonine. The span at 20–29 shows a compositional bias: basic residues; that stretch reads KSVRKARQKR. Residues Ser30, Ser32, and Ser34 each carry the phosphoserine modification. The segment covering 30 to 40 has biased composition (low complexity); it reads SQSSSQFRSQG.

This sequence belongs to the phosphatase 2A regulatory subunit B56 family. Found in a complex with at least ARL2, PPP2CB; PPP2R1A, PPP2R2A, PPP2R5E and TBCD. PP2A consists of a common heterodimeric core enzyme, composed of a 36 kDa catalytic subunit (subunit C) and a 65 kDa constant regulatory subunit (PR65 or subunit A), that associates with a variety of regulatory subunits. Proteins that associate with the core dimer include three families of regulatory subunits B (the R2/B/PR55/B55, R3/B''/PR72/PR130/PR59 and R5/B'/B56 families), the 48 kDa variable regulatory subunit, viral proteins, and cell signaling molecules. Interacts with SGO1. In terms of processing, phosphorylated on serine residues.

Its subcellular location is the cytoplasm. The B regulatory subunit might modulate substrate selectivity and catalytic activity, and might also direct the localization of the catalytic enzyme to a particular subcellular compartment. This Homo sapiens (Human) protein is Serine/threonine-protein phosphatase 2A 56 kDa regulatory subunit epsilon isoform (PPP2R5E).